The sequence spans 142 residues: Large ribosomal subunit protein uL11 (142 aa).

This sequence belongs to the universal ribosomal protein uL11 family. In terms of assembly, part of the ribosomal stalk of the 50S ribosomal subunit. Interacts with L10 and the large rRNA to form the base of the stalk. L10 forms an elongated spine to which L12 dimers bind in a sequential fashion forming a multimeric L10(L12)X complex. In terms of processing, one or more lysine residues are methylated.

Forms part of the ribosomal stalk which helps the ribosome interact with GTP-bound translation factors. This chain is Large ribosomal subunit protein uL11, found in Edwardsiella ictaluri (strain 93-146).